The primary structure comprises 142 residues: MKTFVAKPETVKRDWYVVDAEGKTLGRLATEIARRLRGKHKPEYTPHVDTGDYIVVINAEKVAVTGNKAQGKMYYSHTGFPGGIKSISFEKLIAKKPEMVIQKAVKGMLPRGPLGRAMFRKLKVYAGTEHNHIAQQPKQLDI.

It belongs to the universal ribosomal protein uL13 family. In terms of assembly, part of the 50S ribosomal subunit.

Its function is as follows. This protein is one of the early assembly proteins of the 50S ribosomal subunit, although it is not seen to bind rRNA by itself. It is important during the early stages of 50S assembly. In Idiomarina loihiensis (strain ATCC BAA-735 / DSM 15497 / L2-TR), this protein is Large ribosomal subunit protein uL13.